The following is a 314-amino-acid chain: Thymidylate synthase (314 aa).

DUMP contacts are provided by residues Arg-21 and 176–177 (RR). The active-site Nucleophile is the Cys-196. Residues 216–219 (RSAD), Asn-227, and 257–259 (HLY) contribute to the dUMP site. (6R)-5,10-methylene-5,6,7,8-tetrahydrofolate is bound at residue Asp-219. Ser-313 is a (6R)-5,10-methylene-5,6,7,8-tetrahydrofolate binding site.

This sequence belongs to the thymidylate synthase family. Bacterial-type ThyA subfamily. Homodimer.

It localises to the cytoplasm. The enzyme catalyses dUMP + (6R)-5,10-methylene-5,6,7,8-tetrahydrofolate = 7,8-dihydrofolate + dTMP. It functions in the pathway pyrimidine metabolism; dTTP biosynthesis. Its function is as follows. Catalyzes the reductive methylation of 2'-deoxyuridine-5'-monophosphate (dUMP) to 2'-deoxythymidine-5'-monophosphate (dTMP) while utilizing 5,10-methylenetetrahydrofolate (mTHF) as the methyl donor and reductant in the reaction, yielding dihydrofolate (DHF) as a by-product. This enzymatic reaction provides an intracellular de novo source of dTMP, an essential precursor for DNA biosynthesis. This is Thymidylate synthase from Listeria monocytogenes serovar 1/2a (strain ATCC BAA-679 / EGD-e).